Consider the following 154-residue polypeptide: D-aminoacyl-tRNA deacylase (154 aa).

Residues 142–143 (GP) carry the Gly-cisPro motif, important for rejection of L-amino acids motif.

This sequence belongs to the DTD family. Homodimer.

It is found in the cytoplasm. The catalysed reaction is glycyl-tRNA(Ala) + H2O = tRNA(Ala) + glycine + H(+). It carries out the reaction a D-aminoacyl-tRNA + H2O = a tRNA + a D-alpha-amino acid + H(+). Functionally, an aminoacyl-tRNA editing enzyme that deacylates mischarged D-aminoacyl-tRNAs. Also deacylates mischarged glycyl-tRNA(Ala), protecting cells against glycine mischarging by AlaRS. Acts via tRNA-based rather than protein-based catalysis; rejects L-amino acids rather than detecting D-amino acids in the active site. By recycling D-aminoacyl-tRNA to D-amino acids and free tRNA molecules, this enzyme counteracts the toxicity associated with the formation of D-aminoacyl-tRNA entities in vivo and helps enforce protein L-homochirality. This chain is D-aminoacyl-tRNA deacylase (DTD1), found in Yarrowia lipolytica (strain CLIB 122 / E 150) (Yeast).